The sequence spans 115 residues: Large ribosomal subunit protein bL20 (115 aa).

This sequence belongs to the bacterial ribosomal protein bL20 family.

In terms of biological role, binds directly to 23S ribosomal RNA and is necessary for the in vitro assembly process of the 50S ribosomal subunit. It is not involved in the protein synthesizing functions of that subunit. In Prochlorococcus marinus (strain AS9601), this protein is Large ribosomal subunit protein bL20.